A 108-amino-acid chain; its full sequence is Trissin (108 aa).

The N-terminal stretch at 1–29 is a signal peptide; it reads MTKTTMHWLAHFQIILLCIWLMCPPSSQA. 3 disulfide bridges follow: Cys-32-Cys-43, Cys-35-Cys-52, and Cys-39-Cys-51. Positions 57-108 are excised as a propeptide; the sequence is RKRSDPDALRQSSNRRLIDFILLQGRALFTQELRERRHNGTLMDLGLNTYYP.

It localises to the secreted. Activates the G-protein coupled receptor TrissinR in vitro, leading to increased intracellular calcium ion levels. The protein is Trissin of Drosophila melanogaster (Fruit fly).